The following is a 515-amino-acid chain: Bifunctional purine biosynthesis protein PurH (515 aa).

Residues 1–145 (MTKRALISVS…KNHASVTVVV (145 aa)) enclose the MGS-like domain.

The protein belongs to the PurH family.

The catalysed reaction is (6R)-10-formyltetrahydrofolate + 5-amino-1-(5-phospho-beta-D-ribosyl)imidazole-4-carboxamide = 5-formamido-1-(5-phospho-D-ribosyl)imidazole-4-carboxamide + (6S)-5,6,7,8-tetrahydrofolate. The enzyme catalyses IMP + H2O = 5-formamido-1-(5-phospho-D-ribosyl)imidazole-4-carboxamide. It functions in the pathway purine metabolism; IMP biosynthesis via de novo pathway; 5-formamido-1-(5-phospho-D-ribosyl)imidazole-4-carboxamide from 5-amino-1-(5-phospho-D-ribosyl)imidazole-4-carboxamide (10-formyl THF route): step 1/1. Its pathway is purine metabolism; IMP biosynthesis via de novo pathway; IMP from 5-formamido-1-(5-phospho-D-ribosyl)imidazole-4-carboxamide: step 1/1. This Streptococcus gordonii (strain Challis / ATCC 35105 / BCRC 15272 / CH1 / DL1 / V288) protein is Bifunctional purine biosynthesis protein PurH.